The sequence spans 291 residues: Beta-lactamase CTX-M-6 (291 aa).

Residues 1–28 form the signal peptide; it reads MMTQSIRRSMLTVMATLPLLFSSATLHA. Ser-73 serves as the catalytic Acyl-ester intermediate. A substrate-binding site is contributed by 237–239; that stretch reads KTG.

The protein belongs to the class-A beta-lactamase family.

It catalyses the reaction a beta-lactam + H2O = a substituted beta-amino acid. Its function is as follows. Has cefotaxime-hydrolyzing activity. This Salmonella typhimurium protein is Beta-lactamase CTX-M-6 (bla).